Reading from the N-terminus, the 237-residue chain is Large ribosomal subunit protein uL1 (237 aa).

This sequence belongs to the universal ribosomal protein uL1 family. As to quaternary structure, part of the 50S ribosomal subunit.

Functionally, binds directly to 23S rRNA. The L1 stalk is quite mobile in the ribosome, and is involved in E site tRNA release. Protein L1 is also a translational repressor protein, it controls the translation of the L11 operon by binding to its mRNA. This is Large ribosomal subunit protein uL1 from Chloroflexus aurantiacus (strain ATCC 29364 / DSM 637 / Y-400-fl).